A 237-amino-acid polypeptide reads, in one-letter code: Octanoyltransferase (237 aa).

A BPL/LPL catalytic domain is found at 27–210 (SGGDDILLLL…EFYHIFQPAG (184 aa)). Substrate is bound by residues 72–79 (RGGNVTCH), 139–141 (SLG), and 152–154 (GMA). Cys-170 acts as the Acyl-thioester intermediate in catalysis.

This sequence belongs to the LipB family.

The protein localises to the cytoplasm. The catalysed reaction is octanoyl-[ACP] + L-lysyl-[protein] = N(6)-octanoyl-L-lysyl-[protein] + holo-[ACP] + H(+). Its pathway is protein modification; protein lipoylation via endogenous pathway; protein N(6)-(lipoyl)lysine from octanoyl-[acyl-carrier-protein]: step 1/2. In terms of biological role, catalyzes the transfer of endogenously produced octanoic acid from octanoyl-acyl-carrier-protein onto the lipoyl domains of lipoate-dependent enzymes. Lipoyl-ACP can also act as a substrate although octanoyl-ACP is likely to be the physiological substrate. The sequence is that of Octanoyltransferase from Desulfovibrio desulfuricans (strain ATCC 27774 / DSM 6949 / MB).